Consider the following 258-residue polypeptide: Imidazole glycerol phosphate synthase subunit HisF (258 aa).

Active-site residues include D11 and D130.

Belongs to the HisA/HisF family. As to quaternary structure, heterodimer of HisH and HisF.

The protein localises to the cytoplasm. The catalysed reaction is 5-[(5-phospho-1-deoxy-D-ribulos-1-ylimino)methylamino]-1-(5-phospho-beta-D-ribosyl)imidazole-4-carboxamide + L-glutamine = D-erythro-1-(imidazol-4-yl)glycerol 3-phosphate + 5-amino-1-(5-phospho-beta-D-ribosyl)imidazole-4-carboxamide + L-glutamate + H(+). It functions in the pathway amino-acid biosynthesis; L-histidine biosynthesis; L-histidine from 5-phospho-alpha-D-ribose 1-diphosphate: step 5/9. Functionally, IGPS catalyzes the conversion of PRFAR and glutamine to IGP, AICAR and glutamate. The HisF subunit catalyzes the cyclization activity that produces IGP and AICAR from PRFAR using the ammonia provided by the HisH subunit. This is Imidazole glycerol phosphate synthase subunit HisF from Sodalis glossinidius (strain morsitans).